The sequence spans 315 residues: MKNIIRHLSKPAYREEFKGDTSPRTAAYISNRADASLGSTYKLPLEAKFWKMSIALICFLIVSSNCFASEPLPWQVTFQPPASPIMEELHHFHNFLLYISTAIVLFVAGLLGFVCIRFNAKNNPVPAKFSHNVLIEIIWTVIPIIILVIIAVPSFRILRHAEKIPETDLTIKVVGYQWYWHYIYPDHDNLEFDSVMISDENLKPDQKRLLDVDNRIVIPENATVRFLITAGDVIHSFAVPSLGFKIDAVPGRINETWTRVAKKGVYYGQCSELCGINHGFMPIAIEVVSKEDFDNWIASKNKTAMNGKNPKLAAN.

Positions 6 to 53 (RHLSKPAYREEFKGDTSPRTAAYISNRADASLGSTYKLPLEAKFWKMS) constitute an RPE1 insert domain. The next 3 helical transmembrane spans lie at 41-61 (YKLP…CFLI), 96-116 (LLYI…FVCI), and 133-153 (VLIE…IAVP). Cu cation contacts are provided by H235, C270, C274, and H278.

Belongs to the cytochrome c oxidase subunit 2 family. It depends on Cu cation as a cofactor. Requires heme as cofactor.

It localises to the cell membrane. The enzyme catalyses 4 Fe(II)-[cytochrome c] + O2 + 8 H(+)(in) = 4 Fe(III)-[cytochrome c] + 2 H2O + 4 H(+)(out). Functionally, subunits I and II form the functional core of the enzyme complex. Electrons originating in cytochrome c are transferred via heme a and Cu(A) to the binuclear center formed by heme a3 and Cu(B). The sequence is that of Probable cytochrome c oxidase subunit 2 (ctaC) from Rickettsia felis (strain ATCC VR-1525 / URRWXCal2) (Rickettsia azadi).